Here is a 208-residue protein sequence, read N- to C-terminus: Small ribosomal subunit protein uS4 (208 aa).

The S4 RNA-binding domain occupies 98 to 159 (RRLDNVVYRL…KSRNVAAISE (62 aa)).

The protein belongs to the universal ribosomal protein uS4 family. In terms of assembly, part of the 30S ribosomal subunit. Contacts protein S5. The interaction surface between S4 and S5 is involved in control of translational fidelity.

Functionally, one of the primary rRNA binding proteins, it binds directly to 16S rRNA where it nucleates assembly of the body of the 30S subunit. Its function is as follows. With S5 and S12 plays an important role in translational accuracy. The chain is Small ribosomal subunit protein uS4 from Trichlorobacter lovleyi (strain ATCC BAA-1151 / DSM 17278 / SZ) (Geobacter lovleyi).